The primary structure comprises 207 residues: Large ribosomal subunit protein uL4 (207 aa).

The tract at residues 48 to 85 (THKVKNRSEVRGGGRKPWRQKGTGRARQGSIRSPQWRG) is disordered. The segment covering 60–71 (GGRKPWRQKGTG) has biased composition (basic residues).

It belongs to the universal ribosomal protein uL4 family. In terms of assembly, part of the 50S ribosomal subunit.

In terms of biological role, one of the primary rRNA binding proteins, this protein initially binds near the 5'-end of the 23S rRNA. It is important during the early stages of 50S assembly. It makes multiple contacts with different domains of the 23S rRNA in the assembled 50S subunit and ribosome. Its function is as follows. Forms part of the polypeptide exit tunnel. This is Large ribosomal subunit protein uL4 from Bacillus subtilis (strain 168).